Consider the following 379-residue polypeptide: All-trans-retinol dehydrogenase [NAD(+)] ADH4 (379 aa).

T1 carries the post-translational modification N-acetylthreonine. Residues C46, H68, C98, C101, C104, C112, and C179 each contribute to the Zn(2+) site. NAD(+) contacts are provided by residues 204-209 (GLGGVG), D228, K233, 297-299 (VGV), and R374.

It belongs to the zinc-containing alcohol dehydrogenase family. Class-II subfamily. In terms of assembly, homodimer. Requires Zn(2+) as cofactor.

The protein localises to the cytoplasm. It carries out the reaction all-trans-retinol + NAD(+) = all-trans-retinal + NADH + H(+). It catalyses the reaction 9-cis-retinol + NAD(+) = 9-cis-retinal + NADH + H(+). The enzyme catalyses 20-oxo-(5Z,8Z,11Z,14Z)-eicosatetraenoate + NAD(+) + H2O = (5Z,8Z,11Z,14Z)-eicosatetraenedioate + NADH + 2 H(+). The catalysed reaction is 20-hydroxy-(5Z,8Z,11Z,14Z)-eicosatetraenoate + NAD(+) = 20-oxo-(5Z,8Z,11Z,14Z)-eicosatetraenoate + NADH + H(+). It carries out the reaction 1,4-benzoquinone + NADH + H(+) = hydroquinone + NAD(+). Its activity is regulated as follows. Oxidation of 20-HETE is inhibited by low concentrations of N-heptylformamide. Oxidation of 20-HETE is a decreased by 55-65% by either all-trans-retinol or all-trans-retinoic acid. Strongly inhibited by omega-hydroxy fatty acids. In terms of biological role, catalyzes the NAD-dependent oxidation of either all-trans-retinol or 9-cis-retinol. Also oxidizes long chain omega-hydroxy fatty acids, such as 20-HETE, producing both the intermediate aldehyde, 20-oxoarachidonate and the end product, a dicarboxylic acid, (5Z,8Z,11Z,14Z)-eicosatetraenedioate. Also catalyzes the reduction of benzoquinones. The polypeptide is All-trans-retinol dehydrogenase [NAD(+)] ADH4 (Struthio camelus (Common ostrich)).